A 323-amino-acid polypeptide reads, in one-letter code: Phosphatidylglycerol--prolipoprotein diacylglyceryl transferase (323 aa).

3 consecutive transmembrane segments (helical) span residues 15–35 (VIQG…ILIS), 58–78 (FMFS…TLVY), and 106–126 (GMAI…TINT). R156 is an a 1,2-diacyl-sn-glycero-3-phospho-(1'-sn-glycerol) binding site. 2 helical membrane-spanning segments follow: residues 242 to 262 (GFIF…IEYL) and 289 to 309 (ISMG…WIIV).

It belongs to the Lgt family.

It is found in the cell inner membrane. It catalyses the reaction L-cysteinyl-[prolipoprotein] + a 1,2-diacyl-sn-glycero-3-phospho-(1'-sn-glycerol) = an S-1,2-diacyl-sn-glyceryl-L-cysteinyl-[prolipoprotein] + sn-glycerol 1-phosphate + H(+). Its pathway is protein modification; lipoprotein biosynthesis (diacylglyceryl transfer). Catalyzes the transfer of the diacylglyceryl group from phosphatidylglycerol to the sulfhydryl group of the N-terminal cysteine of a prolipoprotein, the first step in the formation of mature lipoproteins. In Borreliella afzelii (strain PKo) (Borrelia afzelii), this protein is Phosphatidylglycerol--prolipoprotein diacylglyceryl transferase.